The chain runs to 124 residues: MATINQLVRKPRSLKAAKSNVPALEACPQKRGVCTRVYTTTPKKPNSALRKVCRVRLTNGFEVTSYIGGEGHNLQEHSVILIRGGRVKDLPGVRYHTVRGALDCSGVKDRKQSRSKYGVKKPKA.

Asp-89 carries the 3-methylthioaspartic acid modification.

This sequence belongs to the universal ribosomal protein uS12 family. Part of the 30S ribosomal subunit. Contacts proteins S8 and S17. May interact with IF1 in the 30S initiation complex.

With S4 and S5 plays an important role in translational accuracy. Its function is as follows. Interacts with and stabilizes bases of the 16S rRNA that are involved in tRNA selection in the A site and with the mRNA backbone. Located at the interface of the 30S and 50S subunits, it traverses the body of the 30S subunit contacting proteins on the other side and probably holding the rRNA structure together. The combined cluster of proteins S8, S12 and S17 appears to hold together the shoulder and platform of the 30S subunit. This chain is Small ribosomal subunit protein uS12, found in Pectobacterium atrosepticum (strain SCRI 1043 / ATCC BAA-672) (Erwinia carotovora subsp. atroseptica).